The following is a 190-amino-acid chain: Elongation factor P 2 (190 aa).

This sequence belongs to the elongation factor P family.

It localises to the cytoplasm. Its pathway is protein biosynthesis; polypeptide chain elongation. In terms of biological role, involved in peptide bond synthesis. Stimulates efficient translation and peptide-bond synthesis on native or reconstituted 70S ribosomes in vitro. Probably functions indirectly by altering the affinity of the ribosome for aminoacyl-tRNA, thus increasing their reactivity as acceptors for peptidyl transferase. This chain is Elongation factor P 2 (efp2), found in Protochlamydia amoebophila (strain UWE25).